The sequence spans 309 residues: MILLTFHTRRLVSHAYCGLKPASQKKSIALEMTRPSSNLADFREAFAKAKHIAVITGAGVSAESGVPTFRGAGGYWRKWQAQHLATPEAFARNPSRVWEFYHYRREVMLTKNPNPAHLAIAECETRLRKQGRKLVVITQNIDELHRKAGSRNLFDIHGSLFKTRCTSCGRVKENYKSPICPALDGKGAPESDVQDAKIPVEQLPRCEENGCSGLLRPNVVWFGETLDSNLLGEVEKELETCDLCVVVGTSSVVYPAAMFAPQVAARGVPVAEFNMENTPATTSFTFHFHGPCGTTLPPALARHETELIS.

A mitochondrion-targeting transit peptide spans methionine 1 to proline 35. The Deacetylase sirtuin-type domain occupies serine 36–glutamate 306. Glycine 57–tryptophan 76 is an NAD(+) binding site. Positions 101 and 104 each coordinate substrate. Glutamine 139–aspartate 142 contributes to the NAD(+) binding site. The Proton acceptor role is filled by histidine 157. 4 residues coordinate Zn(2+): cysteine 165, cysteine 168, cysteine 206, and cysteine 211. NAD(+) is bound by residues glycine 248 to serine 250, asparagine 274 to glutamate 276, and cysteine 292.

This sequence belongs to the sirtuin family. Class III subfamily. It depends on Zn(2+) as a cofactor.

It is found in the mitochondrion. The protein localises to the cytoplasm. It localises to the cytosol. Its subcellular location is the nucleus. It carries out the reaction N(6)-malonyl-L-lysyl-[protein] + NAD(+) + H2O = 2''-O-malonyl-ADP-D-ribose + nicotinamide + L-lysyl-[protein]. It catalyses the reaction N(6)-succinyl-L-lysyl-[protein] + NAD(+) + H2O = 2''-O-succinyl-ADP-D-ribose + nicotinamide + L-lysyl-[protein]. The catalysed reaction is N(6)-glutaryl-L-lysyl-[protein] + NAD(+) + H2O = 2''-O-glutaryl-ADP-D-ribose + nicotinamide + L-lysyl-[protein]. Its function is as follows. NAD-dependent lysine demalonylase, desuccinylase and deglutarylase that specifically removes malonyl, succinyl and glutaryl groups on target proteins. Has weak NAD-dependent protein deacetylase activity; however this activity may not be physiologically relevant in vivo. The polypeptide is NAD-dependent protein deacylase sirtuin-5A, mitochondrial (sirt5-a) (Xenopus laevis (African clawed frog)).